We begin with the raw amino-acid sequence, 351 residues long: Methylthioribose-1-phosphate isomerase (351 aa).

Residue Asp-244 is the Proton donor of the active site.

The protein belongs to the eIF-2B alpha/beta/delta subunits family. MtnA subfamily.

It localises to the cytoplasm. Its subcellular location is the nucleus. It catalyses the reaction 5-(methylsulfanyl)-alpha-D-ribose 1-phosphate = 5-(methylsulfanyl)-D-ribulose 1-phosphate. The protein operates within amino-acid biosynthesis; L-methionine biosynthesis via salvage pathway; L-methionine from S-methyl-5-thio-alpha-D-ribose 1-phosphate: step 1/6. Its function is as follows. Catalyzes the interconversion of methylthioribose-1-phosphate (MTR-1-P) into methylthioribulose-1-phosphate (MTRu-1-P). This Anopheles gambiae (African malaria mosquito) protein is Methylthioribose-1-phosphate isomerase.